A 260-amino-acid polypeptide reads, in one-letter code: Putative methylesterase 19 (260 aa).

S81 serves as the catalytic Acyl-ester intermediate. Active-site charge relay system residues include D210 and H238.

This sequence belongs to the AB hydrolase superfamily. Methylesterase family.

Functionally, putative methylesterase. The sequence is that of Putative methylesterase 19 from Arabidopsis thaliana (Mouse-ear cress).